A 104-amino-acid polypeptide reads, in one-letter code: Phosphoribosyl-ATP pyrophosphatase (104 aa).

It belongs to the PRA-PH family.

The protein resides in the cytoplasm. The catalysed reaction is 1-(5-phospho-beta-D-ribosyl)-ATP + H2O = 1-(5-phospho-beta-D-ribosyl)-5'-AMP + diphosphate + H(+). It functions in the pathway amino-acid biosynthesis; L-histidine biosynthesis; L-histidine from 5-phospho-alpha-D-ribose 1-diphosphate: step 2/9. This is Phosphoribosyl-ATP pyrophosphatase from Nitrosococcus oceani (strain ATCC 19707 / BCRC 17464 / JCM 30415 / NCIMB 11848 / C-107).